The sequence spans 327 residues: Methionine import ATP-binding protein MetN (327 aa).

The ABC transporter domain maps to 3–239; sequence VELKNIEKIY…PKHAVTKELL (237 aa). 36 to 43 lines the ATP pocket; that stretch reads GYSGAGKS.

It belongs to the ABC transporter superfamily. Methionine importer (TC 3.A.1.24) family. In terms of assembly, the complex is composed of two ATP-binding proteins (MetN), two transmembrane proteins (MetI) and a solute-binding protein (MetQ).

It localises to the cell inner membrane. The catalysed reaction is L-methionine(out) + ATP + H2O = L-methionine(in) + ADP + phosphate + H(+). The enzyme catalyses D-methionine(out) + ATP + H2O = D-methionine(in) + ADP + phosphate + H(+). Part of the ABC transporter complex MetNIQ involved in methionine import. Responsible for energy coupling to the transport system. The chain is Methionine import ATP-binding protein MetN from Helicobacter pylori (strain J99 / ATCC 700824) (Campylobacter pylori J99).